A 419-amino-acid chain; its full sequence is Aminoacyltransferase FemB (419 aa).

Belongs to the FemABX family. In terms of assembly, homodimer. Interacts with FemA.

Its subcellular location is the cytoplasm. The enzyme catalyses MurNAc-L-Ala-D-isoglutaminyl-L-Lys-(N(6)-tri-Gly)-D-Ala-D-Ala-diphospho-di-trans,octa-cis-undecaprenyl-GlcNAc + 2 glycyl-tRNA(Gly) = MurNAc-L-Ala-D-isoglutaminyl-L-Lys-(N(6)-penta-Gly)-D-Ala-D-Ala-diphospho-di-trans,octa-cis-undecaprenyl-GlcNAc + 2 tRNA(Gly) + 2 H(+). Its function is as follows. Catalyzes the formation of the pentaglycine interpeptide bridge, which is characteristic of the S.aureus peptidoglycan. Adds glycines 4 and 5 of the pentaglycine bridge, using glycyl-tRNA(Gly) as donor. The protein is Aminoacyltransferase FemB (femB) of Staphylococcus aureus (strain bovine RF122 / ET3-1).